We begin with the raw amino-acid sequence, 461 residues long: Cysteine--tRNA ligase (461 aa).

Cysteine 28 is a binding site for Zn(2+). A 'HIGH' region motif is present at residues 30-40 (ITVYDLCHIGH). 3 residues coordinate Zn(2+): cysteine 209, histidine 234, and glutamate 238. Residues 266–270 (KMSKS) carry the 'KMSKS' region motif. Lysine 269 is an ATP binding site.

The protein belongs to the class-I aminoacyl-tRNA synthetase family. Monomer. Zn(2+) is required as a cofactor.

The protein resides in the cytoplasm. The enzyme catalyses tRNA(Cys) + L-cysteine + ATP = L-cysteinyl-tRNA(Cys) + AMP + diphosphate. The chain is Cysteine--tRNA ligase from Pectobacterium carotovorum subsp. carotovorum (strain PC1).